A 64-amino-acid chain; its full sequence is Large ribosomal subunit protein bL35 (64 aa).

Positions 1 to 26 (MPKMKSHRGASKRFKRTASGKLKRGR) are enriched in basic residues. 2 disordered regions span residues 1–28 (MPKM…GRAY) and 33–52 (FGNK…MVSS).

Belongs to the bacterial ribosomal protein bL35 family.

The protein is Large ribosomal subunit protein bL35 of Exiguobacterium sibiricum (strain DSM 17290 / CCUG 55495 / CIP 109462 / JCM 13490 / 255-15).